A 549-amino-acid chain; its full sequence is DNA mismatch repair protein MutL (549 aa).

It belongs to the DNA mismatch repair MutL/HexB family.

Functionally, this protein is involved in the repair of mismatches in DNA. It is required for dam-dependent methyl-directed DNA mismatch repair. May act as a 'molecular matchmaker', a protein that promotes the formation of a stable complex between two or more DNA-binding proteins in an ATP-dependent manner without itself being part of a final effector complex. In Pseudothermotoga lettingae (strain ATCC BAA-301 / DSM 14385 / NBRC 107922 / TMO) (Thermotoga lettingae), this protein is DNA mismatch repair protein MutL.